Reading from the N-terminus, the 616-residue chain is Chaperone protein HscA homolog (616 aa).

This sequence belongs to the heat shock protein 70 family.

Functionally, chaperone involved in the maturation of iron-sulfur cluster-containing proteins. Has a low intrinsic ATPase activity which is markedly stimulated by HscB. The protein is Chaperone protein HscA homolog of Histophilus somni (strain 129Pt) (Haemophilus somnus).